We begin with the raw amino-acid sequence, 221 residues long: GTP-binding nuclear protein Ran-2 (221 aa).

The 165-residue stretch at 10–174 (DYPSFKLVIV…LYLARKLAGD (165 aa)) folds into the Small GTPase Ran-type domain. Position 21–28 (21–28 (DGGTGKTT)) interacts with GTP. The interval 40–48 (KKYEPTIGV) is switch-I. GTP contacts are provided by residues glycine 71, 125 to 128 (NKVD), and 153 to 155 (SAK). Residues 71–87 (GQEKFGGLRDGYYIHGQ) are switch-II. Residues 202–212 (ADLAAAAAQPL) are compositionally biased toward low complexity. The segment at 202 to 221 (ADLAAAAAQPLPDDDDDAFE) is disordered.

The protein belongs to the small GTPase superfamily. Ran family. Found in a nuclear export complex with RanGTP, exportin and pre-miRNA. Interacts with RanBP1a and RanBP1b. Interacts with PHRIP1. Interacts with KPNB1. Binds to PHIP1.

The protein resides in the nucleus. Its subcellular location is the nucleus envelope. Its function is as follows. GTP-binding protein involved in nucleocytoplasmic transport. Required for the import of protein into the nucleus and also for RNA export. Involved in chromatin condensation and control of cell cycle. In Arabidopsis thaliana (Mouse-ear cress), this protein is GTP-binding nuclear protein Ran-2.